The following is a 212-amino-acid chain: Golgi SNAP receptor complex member 2 homolog memb-1 (212 aa).

Over 1 to 189 the chain is Cytoplasmic; sequence MEAQYQSTNF…QVIDRRVRED (189 aa). A helical; Anchor for type IV membrane protein membrane pass occupies residues 190-210; sequence WIFVIGCIVCCIFMYAFYRFW. Topologically, residues 211 to 212 are vesicular; the sequence is RG.

Belongs to the GOSR2 family. In terms of assembly, part of a unique SNARE complex.

The protein localises to the golgi apparatus. Its subcellular location is the cis-Golgi network membrane. The protein resides in the golgi apparatus membrane. It is found in the endoplasmic reticulum membrane. Its function is as follows. Involved in transport of proteins from the cis/medial-Golgi to the trans-Golgi network. This chain is Golgi SNAP receptor complex member 2 homolog memb-1, found in Caenorhabditis briggsae.